The chain runs to 286 residues: Transcriptional regulator of yeast form adherence 4 (286 aa).

Composition is skewed to low complexity over residues 1–29 and 37–65; these read MSLP…PPSS and LSTS…TTTN. The disordered stretch occupies residues 1–71; sequence MSLPMSPVSP…TTTNYGTKTP (71 aa). 2 consecutive C2H2-type zinc fingers follow at residues 78–101 and 107–130; these read FNCT…LSTH and FTCG…KNLH. Residues 146-260 form a disordered region; the sequence is HCNKDNDSKS…ITNSSTSHIH (115 aa). Low complexity-rich tracts occupy residues 156-165 and 228-244; these read GSDSNTNKTN and SVPS…PTST. Residues 245–260 show a composition bias toward polar residues; that stretch reads NNDTASITNSSTSHIH.

It is found in the nucleus. In terms of biological role, transcription factor required for yeast cell adherence to silicone substrate. The protein is Transcriptional regulator of yeast form adherence 4 (TRY4) of Candida albicans (strain SC5314 / ATCC MYA-2876) (Yeast).